We begin with the raw amino-acid sequence, 117 residues long: MILYVLPTSLSLCLLLMIIYLLTANLFKFASYELKTPFECGFDPLSNMRSPMTTRFFILTVLFLIFDVEVVLLFPVLSMVSFMTSPLIIMSIILFMMVLLIGLLYEMYYGVLDWVLN.

3 helical membrane-spanning segments follow: residues 2 to 22, 56 to 76, and 85 to 105; these read ILYVLPTSLSLCLLLMIIYLL, FFILTVLFLIFDVEVVLLFPV, and SPLIIMSIILFMMVLLIGLLY.

Belongs to the complex I subunit 3 family.

It localises to the mitochondrion membrane. It catalyses the reaction a ubiquinone + NADH + 5 H(+)(in) = a ubiquinol + NAD(+) + 4 H(+)(out). Core subunit of the mitochondrial membrane respiratory chain NADH dehydrogenase (Complex I) that is believed to belong to the minimal assembly required for catalysis. Complex I functions in the transfer of electrons from NADH to the respiratory chain. The immediate electron acceptor for the enzyme is believed to be ubiquinone. The protein is NADH-ubiquinone oxidoreductase chain 3 (ND3) of Albinaria caerulea (Land snail).